Reading from the N-terminus, the 293-residue chain is tRNA pseudouridine synthase B (293 aa).

D39 serves as the catalytic Nucleophile.

The protein belongs to the pseudouridine synthase TruB family. Type 1 subfamily.

The catalysed reaction is uridine(55) in tRNA = pseudouridine(55) in tRNA. Its function is as follows. Responsible for synthesis of pseudouridine from uracil-55 in the psi GC loop of transfer RNAs. This Streptococcus thermophilus (strain ATCC BAA-250 / LMG 18311) protein is tRNA pseudouridine synthase B.